The primary structure comprises 234 residues: DNA repair protein RecO (234 aa).

It belongs to the RecO family.

Involved in DNA repair and RecF pathway recombination. The sequence is that of DNA repair protein RecO from Halorhodospira halophila (strain DSM 244 / SL1) (Ectothiorhodospira halophila (strain DSM 244 / SL1)).